A 641-amino-acid polypeptide reads, in one-letter code: 1-deoxy-D-xylulose-5-phosphate synthase (641 aa).

Thiamine diphosphate-binding positions include His79 and 120-122 (GHS). Mg(2+) is bound at residue Asp151. Residues 152 to 153 (GS), Asn180, Tyr291, and Glu375 each bind thiamine diphosphate. Asn180 provides a ligand contact to Mg(2+).

It belongs to the transketolase family. DXPS subfamily. As to quaternary structure, homodimer. Mg(2+) serves as cofactor. Requires thiamine diphosphate as cofactor.

It catalyses the reaction D-glyceraldehyde 3-phosphate + pyruvate + H(+) = 1-deoxy-D-xylulose 5-phosphate + CO2. The protein operates within metabolic intermediate biosynthesis; 1-deoxy-D-xylulose 5-phosphate biosynthesis; 1-deoxy-D-xylulose 5-phosphate from D-glyceraldehyde 3-phosphate and pyruvate: step 1/1. In terms of biological role, catalyzes the acyloin condensation reaction between C atoms 2 and 3 of pyruvate and glyceraldehyde 3-phosphate to yield 1-deoxy-D-xylulose-5-phosphate (DXP). This chain is 1-deoxy-D-xylulose-5-phosphate synthase, found in Nitratidesulfovibrio vulgaris (strain ATCC 29579 / DSM 644 / CCUG 34227 / NCIMB 8303 / VKM B-1760 / Hildenborough) (Desulfovibrio vulgaris).